We begin with the raw amino-acid sequence, 524 residues long: MGDEFRPSHEERSKMYKSNVRDQNEMRRKRREDEVQIRKNRRDEKFERNRQITVQRSLSHEETSELLKSVADGLQSMQETTIHEALTVLHENLNNTVWTIHVLVKVQILHKLSDVYCNRVISQTTRLLISRTLLKISGIDEVKYERYSSDDRCIQSLVFNISTYGSSEDILCDTFQSIACFIIRSITYRNLALDCAIVSELIDASTINMSIILHRSLMWLVFLFCEKLDRCSPHVDEIAPLLEIISNGIQSTDAMVQTDAASSCASLAEWPPIYHYMSDLKLCSKLVANLRNDKGNARPKVKAGINSIIQATGYFTEEMIDAGLLEVLKGFVNVSYMSQEVCFIISNICVEGEQTIDKLISSGVLREVARVMEASEYRSRREAAFVICHCCASANQKHLEYVVELGMLSAFTDLLTCMDVSLVSYILDAIYLLLQFGEMRLLPDNSNPVAIKLEEIGCREKLEFLCESQSVDIHARAYTIIDRFYVDDDAPLNDDPFAGYQRNNIDDTIEKMIREPIMDQPFSF.

The disordered stretch occupies residues 1-42 (MGDEFRPSHEERSKMYKSNVRDQNEMRRKRREDEVQIRKNRR). The IBB domain maps to 1 to 59 (MGDEFRPSHEERSKMYKSNVRDQNEMRRKRREDEVQIRKNRRDEKFERNRQITVQRSLS).

Belongs to the importin alpha family. As to quaternary structure, forms a complex with an importin beta subunit. As to expression, adult germline tissues.

It localises to the cytoplasm. In terms of biological role, binds specifically and directly to substrates containing either a simple or bipartite NLS motif. Promotes docking of import substrates to the nuclear envelope. Seems to act as a cytosolic receptor for both simple and bipartite NLS motifs. The chain is Importin subunit alpha-1 (ima-1) from Caenorhabditis elegans.